The following is a 164-amino-acid chain: FMN reductase (NADH) RutF (164 aa).

The protein belongs to the non-flavoprotein flavin reductase family. RutF subfamily.

The catalysed reaction is FMNH2 + NAD(+) = FMN + NADH + 2 H(+). Its function is as follows. Catalyzes the reduction of FMN to FMNH2 which is used to reduce pyrimidine by RutA via the Rut pathway. The polypeptide is FMN reductase (NADH) RutF (Escherichia coli O127:H6 (strain E2348/69 / EPEC)).